Reading from the N-terminus, the 315-residue chain is Ribose-phosphate pyrophosphokinase (315 aa).

ATP contacts are provided by residues 37–39 (DGE) and 96–97 (RQ). Residues H131 and D170 each coordinate Mg(2+). Residue K194 is part of the active site. D-ribose 5-phosphate contacts are provided by residues R196, D220, and 224–228 (DTGGT).

Belongs to the ribose-phosphate pyrophosphokinase family. Class I subfamily. Homohexamer. It depends on Mg(2+) as a cofactor.

The protein localises to the cytoplasm. It catalyses the reaction D-ribose 5-phosphate + ATP = 5-phospho-alpha-D-ribose 1-diphosphate + AMP + H(+). The protein operates within metabolic intermediate biosynthesis; 5-phospho-alpha-D-ribose 1-diphosphate biosynthesis; 5-phospho-alpha-D-ribose 1-diphosphate from D-ribose 5-phosphate (route I): step 1/1. In terms of biological role, involved in the biosynthesis of the central metabolite phospho-alpha-D-ribosyl-1-pyrophosphate (PRPP) via the transfer of pyrophosphoryl group from ATP to 1-hydroxyl of ribose-5-phosphate (Rib-5-P). The polypeptide is Ribose-phosphate pyrophosphokinase (Photorhabdus laumondii subsp. laumondii (strain DSM 15139 / CIP 105565 / TT01) (Photorhabdus luminescens subsp. laumondii)).